Consider the following 2000-residue polypeptide: Sodium channel protein type 3 subunit alpha (2000 aa).

Residues 1–128 lie on the Cytoplasmic side of the membrane; that stretch reads MAQALLVPPG…KIAIKILVHS (128 aa). Residues 28–60 are disordered; it reads RAAEEKAKKPKKEQDNDDENKPKPNSDLEAGKN. The span at 46–57 shows a compositional bias: basic and acidic residues; sequence ENKPKPNSDLEA. One copy of the I repeat lies at 110 to 455; sequence ILTPLNPVRK…QQMLEQLKKQ (346 aa). A helical transmembrane segment spans residues 129–146; that stretch reads LFSMLIMCTILTNCVFMT. Residues 147-152 are Extracellular-facing; that stretch reads LSNPPD. Residues 153–174 traverse the membrane as a helical segment; that stretch reads WTKNVEYTFTGIYTFESLIKIL. Topologically, residues 175-188 are cytoplasmic; sequence ARGFCLEDFTFLRD. The chain crosses the membrane as a helical span at residues 189–206; sequence PWNWLDFSVIVMAYVTEF. Residues 207 to 213 are Extracellular-facing; that stretch reads VSLGNVS. N211 carries N-linked (GlcNAc...) asparagine glycosylation. Residues 214-235 form a helical membrane-spanning segment; it reads ALRTFRVLRALKTISVIPGLKT. Over 236–249 the chain is Cytoplasmic; the sequence is IVGALIQSVKKLSD. The chain crosses the membrane as a helical span at residues 250–269; it reads VMILTVFCLSVFALIGLQLF. Residues 270-369 are Extracellular-facing; it reads MGNLRNKCLQ…NYGYTSFDTF (100 aa). N-linked (GlcNAc...) asparagine glycosylation is found at N290, N296, N302, N307, and N339. The segment at residues 370 to 386 is an intramembrane region (pore-forming); the sequence is SWAFLSLFRLMTQDYWE. The Extracellular segment spans residues 387 to 397; it reads NLYQLTLRAAG. Residues 398–424 form a helical membrane-spanning segment; sequence KTYMIFFVLVIFLGSFYLVNLILAVVA. Residues 425–761 lie on the Cytoplasmic side of the membrane; the sequence is MAYEEQNQAT…LVNLIVMDPF (337 aa). Phosphoserine occurs at positions 484, 485, and 486. 3 disordered regions span residues 493-528, 587-631, and 662-681; these read SKSA…KSES, VGSE…ASMS, and ALTS…ETEV. Basic residues predominate over residues 500–509; that stretch reads RNRRKKRRQR. 2 stretches are compositionally biased toward basic and acidic residues: residues 510–528 and 596–610; these read EHLE…KSES and DEHS…RRDS. The segment covering 662–678 has biased composition (polar residues); sequence ALTSPTGQLPPEGTTTE. The stretch at 742-1014 is one II repeat; it reads CCDAWLKVKH…QIAVGRMQKG (273 aa). The chain crosses the membrane as a helical span at residues 762-779; that stretch reads VDLAITICIVLNTLFMAM. The Extracellular portion of the chain corresponds to 780–787; sequence EHYPMTEQ. Residues 788-812 form a helical membrane-spanning segment; it reads FSSVLTVGNLVFTGIFTAEMVLKII. At 813–822 the chain is on the cytoplasmic side; the sequence is AMDPYYYFQE. A helical membrane pass occupies residues 823-842; the sequence is GWNIFDGIIVSLSLMELGLS. The Extracellular segment spans residues 843–846; that stretch reads NVEG. A helical membrane pass occupies residues 847–865; sequence LSVLRSFRLLRVFKLAKSW. The Cytoplasmic segment spans residues 866-883; it reads PTLNMLIKIIGNSVGALG. The chain crosses the membrane as a helical span at residues 884 to 904; sequence NLTLVLAIIVFIFAVVGMQLF. The Extracellular segment spans residues 905 to 929; it reads GKSYKECVCKINDDCTLPRWHMNDF. Residues C913 and C919 are joined by a disulfide bond. Positions 930–945 form an intramembrane region, pore-forming; sequence FHSFLIVFRVLCGEWI. The Extracellular segment spans residues 946 to 956; it reads ETMWDCMEVAG. C951 and C960 are disulfide-bonded. Residues 957–983 form a helical membrane-spanning segment; the sequence is QTMCLIVFMLVMVIGNLVVLNLFLALL. At 984-1205 the chain is on the cytoplasmic side; sequence LSSFSSDNLA…RKTCYSIVEH (222 aa). A disordered region spans residues 1118 to 1162; sequence EEFSSESELEESKEKLNATSSSEGSTVDVVLPREGEQAETEPEED. One copy of the III repeat lies at 1188–1499; sequence KGKIWWNLRK…KKYYNAMKKL (312 aa). The helical transmembrane segment at 1206-1226 threads the bilayer; that stretch reads NWFETFIVFMILLSSGALAFE. Residues 1227-1238 lie on the Extracellular side of the membrane; the sequence is DIYIEQRKTIKT. A helical transmembrane segment spans residues 1239-1260; sequence MLEYADKVFTYIFILEMLLKWV. The Cytoplasmic portion of the chain corresponds to 1261-1266; that stretch reads AYGFQT. The chain crosses the membrane as a helical span at residues 1267-1292; sequence YFTNAWCWLDFLIVDVSLVSLVANAL. The Extracellular segment spans residues 1293–1301; sequence GYSELGAIK. The chain crosses the membrane as a helical span at residues 1302–1320; that stretch reads SLRTLRALRPLRALSRFEG. Over 1321-1333 the chain is Cytoplasmic; sequence MRVVVNALVGAIP. The helical transmembrane segment at 1334 to 1356 threads the bilayer; it reads SIMNVLLVCLIFWLIFSIMGVNL. The Extracellular segment spans residues 1357 to 1402; sequence FAGKFYHCVNMTTGNMFDISDVNNLSDCQALGKQARWKNVKVNFDN. A disulfide bridge links C1364 with C1384. N-linked (GlcNAc...) asparagine glycans are attached at residues N1366 and N1380. The segment at residues 1403 to 1419 is an intramembrane region (pore-forming); it reads VGAGYLALLQVATFKGW. Over 1420–1442 the chain is Extracellular; sequence MDIMYAAVDSRDVKLQPVYEENL. Residues 1443–1468 traverse the membrane as a helical segment; that stretch reads YMYLYFVIFIIFGSFFTLNLFIGVII. The Cytoplasmic segment spans residues 1469–1526; that stretch reads DNFNQQKKKFGGQDIFMTEEQKKYYNAMKKLGSKKPQKPIPRPANKFQGMVFDFVTRQ. The residue at position 1501 (S1501) is a Phosphoserine; by PKC. Residues 1508 to 1806 form an IV repeat; the sequence is IPRPANKFQG…WEKFDPDATQ (299 aa). A helical membrane pass occupies residues 1527–1545; it reads VFDISIMILICLNMVTMMV. Residues 1546–1553 are Extracellular-facing; it reads ETDDQGKY. Residues 1554–1577 traverse the membrane as a helical segment; that stretch reads MTLVLSRINLVFIVLFTGEFVLKL. At 1578-1587 the chain is on the cytoplasmic side; it reads VSLRHYYFTI. Residues 1588–1605 form a helical membrane-spanning segment; that stretch reads GWNIFDFVVVILSIVGMF. At 1606–1617 the chain is on the extracellular side; that stretch reads LAEMIEKYFVSP. A helical membrane pass occupies residues 1618–1640; it reads TLFRVIRLARIGRILRLIKGAKG. Residues 1641–1653 are Cytoplasmic-facing; that stretch reads IRTLLFALMMSLP. Residues 1654–1677 traverse the membrane as a helical segment; that stretch reads ALFNIGLLLFLVMFIYAIFGMSNF. The Extracellular segment spans residues 1678-1699; it reads AYVKKEAGIDDMFNFETFGNSM. Positions 1700 to 1712 form an intramembrane region, pore-forming; the sequence is ICLFQITTSAGWD. The Extracellular portion of the chain corresponds to 1713 to 1744; sequence GLLAPILNSAPPDCDPDTIHPGSSVKGDCGNP. A helical membrane pass occupies residues 1745–1770; the sequence is SVGIFFFVSYIIISFLVVVNMYIAVI. Over 1771–2000 the chain is Cytoplasmic; that stretch reads LENFSVATEE…KGKEVRENQK (230 aa). The IQ domain occupies 1900-1929; the sequence is EEVSAAIIQRNFRCYLLKQRLKNISSNYNK. The segment at 1949–2000 is disordered; that stretch reads LNGNSTPEKTDGSSSTTSPPSYDSVTKPDKEKFEKDKPEKESKGKEVRENQK. Basic and acidic residues predominate over residues 1974–2000; it reads TKPDKEKFEKDKPEKESKGKEVRENQK.

It belongs to the sodium channel (TC 1.A.1.10) family. Nav1.3/SCN3A subfamily. In terms of assembly, heterooligomer of an alpha subunit, SCN3A, and 1 to 3 regulatory beta subunits including SCN1B and SCN2B; disulfide-linked with some beta subunits like SCN2B. Interacts with NEDD4L; could regulate expression of SCN3A at the plasma membrane through ubiquitination-regulated endocytosis. Interacts with the conotoxin GVIIJ. May be ubiquitinated by NEDD4L; which would promote its endocytosis. Post-translationally, phosphorylation at Ser-1501 by PKC in a highly conserved cytoplasmic loop slows inactivation of the sodium channel and reduces peak sodium currents. Expressed in enterochromaffin cells in both colon and small bowel (at protein level).

It is found in the cell membrane. Its subcellular location is the basal cell membrane. The catalysed reaction is Na(+)(in) = Na(+)(out). Functionally, pore-forming subunit of Nav1.3, a voltage-gated sodium (Nav) channel that directly mediates the depolarizing phase of action potentials in excitable membranes. Navs, also called VGSCs (voltage-gated sodium channels) or VDSCs (voltage-dependent sodium channels), operate by switching between closed and open conformations depending on the voltage difference across the membrane. In the open conformation they allow Na(+) ions to selectively pass through the pore, along their electrochemical gradient. The influx of Na+ ions provokes membrane depolarization, initiating the propagation of electrical signals throughout cells and tissues. In some secretory cell types, it also participates in cell excitability through membrane depolarization and regulates cells responsiveness to stimuli triggering secretion. For instance, it controls the release of serotonin/5-hydroxytryptamine by enterochromaffin cells and is required for both glucagon- and glucose-induced insulin secretion in pancreatic endocrine cells. This chain is Sodium channel protein type 3 subunit alpha, found in Homo sapiens (Human).